Consider the following 526-residue polypeptide: MIGVCGFQWSLSFSTMYTVSLPHGPFLGSRAQEAFVGFSVLGLTLLFSKLFYNAYLHPLRKFPGPLLARLSRLYYSYYRSTGQLEWKTLELHKKYGSVVRIAPNELSFNAGTAWDDIYGHTTKRRSGRRLQKEAFFYLGAVAPNGEKNLGASSDEDHSRIRGVLSSAFSEKAVFAQEDLLMRHIGFMVERIRSLNGIPTDAVRWLHHCTFDITTDLSLGASAKTLACDEWSPLAHLMFEGIKEGITAVEILRFAPFKYQAFSLLIKAFGKARLEAFQAAINQAHIRMAQATTDKEDKKPDFMSYIIKANKTSKALTPSEITANVALLLDVGSETTASLLAGCLFYLTKTPHILEKLTSMIRKDFQTPQEINSKNLAQNSYLTAVLNEALRIYPPVAGATPRVTPPEGSQIDGRYVPGNISVAVNQVAMNRSPKNFTNPDQFVPGRWLGDGCFPDDQLQLCQPFSHGPRACQGRNLAWAEMRLIMGHLLWNFDVELSSESENWNSQKTWFIWDKPDLMIRFKSREGQ.

Residues 34–56 traverse the membrane as a helical segment; the sequence is AFVGFSVLGLTLLFSKLFYNAYL. Asn309, Asn418, and Asn434 each carry an N-linked (GlcNAc...) asparagine glycan. A heme-binding site is contributed by Cys470.

This sequence belongs to the cytochrome P450 family. Heme is required as a cofactor.

It localises to the membrane. The protein operates within mycotoxin biosynthesis. Functionally, cytochrome P450 monooxygenase; part of the 2 gene clusters that mediate the biosynthesis of fusicoccins, diterpene glucosides that display phytohormone-like activity and function as potent activators of plasma membrane H(+)-ATPases in plants by modifying 14-3-3 proteins and cause the plant disease constriction canker. The first step in the pathway is performed by the fusicoccadiene synthase PaFS that possesses both prenyl transferase and terpene cyclase activity, converting isopentenyl diphosphate and dimethylallyl diphosphate into geranylgeranyl diphosphate (GGDP) and successively converting GGDP into fusicocca-2,10(14)-diene, a precursor for fusicoccin H. The second step is the oxidation at the C-8 position by the cytochrome P450 monooxygenase PaP450-2 to yield fusicocca-2,10(14)-diene-8-beta-ol. The cytochrome P450 monooxygenase PaP450-1 then catalyzes the hydroxylation at the C-16 position to produce fusicocca-2,10(14)-diene-8-beta,16-diol. The dioxygenase fc-dox then catalyzes the 16-oxydation of fusicocca-2,10(14)-diene-8-beta,16-diol to yield an aldehyde (8-beta-hydroxyfusicocca-1,10(14)-dien-16-al). The short-chain dehydrogenase/reductase fc-sdr catalyzes the reduction of the aldehyde to yield fusicocca-1,10(14)-diene-8-beta,16-diol. The next step is the hydroxylation at C-9 performed by the cytochrome P450 monooxygenase PaP450-3 that leads to fusicoccin H aglycon which is glycosylated to fusicoccin H by the O-glycosyltransferase PaGT. Hydroxylation at C-12 by the cytochrome P450 monooxygenase PaP450-4 leads then to the production of fusicoccin Q and is followed by methylation by the O-methyltransferase PaMT to yield fusicoccin P. Fusicoccin P is further converted to fusicoccin J via prenylation by the O-glucose prenyltransferase PaPT. Cytochrome P450 monooxygenase PaP450-5 then performs hydroxylation at C-19 to yield dideacetyl-fusicoccin A which is acetylated to 3'-O-deacetyl-fusicoccin A by the O-acetyltransferase PaAT-2. Finally, a another acetylation by the O-acetyltransferase PaAT-1 yields fusicoccin A. This is Fusicoccadiene 8-ol C-16-hydroxylase from Phomopsis amygdali (Fusicoccum amygdali).